We begin with the raw amino-acid sequence, 685 residues long: DNA-directed RNA polymerase subunit beta' (685 aa).

Cys69, Cys71, Cys87, and Cys90 together coordinate Zn(2+). Asp489, Asp491, and Asp493 together coordinate Mg(2+).

It belongs to the RNA polymerase beta' chain family. RpoC1 subfamily. In plastids the minimal PEP RNA polymerase catalytic core is composed of four subunits: alpha, beta, beta', and beta''. When a (nuclear-encoded) sigma factor is associated with the core the holoenzyme is formed, which can initiate transcription. Requires Mg(2+) as cofactor. Zn(2+) serves as cofactor.

It is found in the plastid. The protein localises to the chloroplast. It carries out the reaction RNA(n) + a ribonucleoside 5'-triphosphate = RNA(n+1) + diphosphate. In terms of biological role, DNA-dependent RNA polymerase catalyzes the transcription of DNA into RNA using the four ribonucleoside triphosphates as substrates. The sequence is that of DNA-directed RNA polymerase subunit beta' from Buxus microphylla (Littleleaf boxwood).